The following is a 121-amino-acid chain: Large ribosomal subunit protein uL18 (121 aa).

Belongs to the universal ribosomal protein uL18 family. As to quaternary structure, part of the 50S ribosomal subunit; part of the 5S rRNA/L5/L18/L25 subcomplex. Contacts the 5S and 23S rRNAs.

In terms of biological role, this is one of the proteins that bind and probably mediate the attachment of the 5S RNA into the large ribosomal subunit, where it forms part of the central protuberance. This chain is Large ribosomal subunit protein uL18, found in Bdellovibrio bacteriovorus (strain ATCC 15356 / DSM 50701 / NCIMB 9529 / HD100).